Here is a 130-residue protein sequence, read N- to C-terminus: Small ribosomal subunit protein uS8 (130 aa).

It belongs to the universal ribosomal protein uS8 family.

The chain is Small ribosomal subunit protein uS8 (RPS15A) from Strongylocentrotus purpuratus (Purple sea urchin).